Consider the following 375-residue polypeptide: Succinyl-diaminopimelate desuccinylase (375 aa).

H66 contacts Zn(2+). D68 is an active-site residue. Zn(2+) is bound at residue D99. The active-site Proton acceptor is E133. The Zn(2+) site is built by E134, E162, and H348.

Belongs to the peptidase M20A family. DapE subfamily. In terms of assembly, homodimer. Requires Zn(2+) as cofactor. Co(2+) is required as a cofactor.

It catalyses the reaction N-succinyl-(2S,6S)-2,6-diaminopimelate + H2O = (2S,6S)-2,6-diaminopimelate + succinate. Its pathway is amino-acid biosynthesis; L-lysine biosynthesis via DAP pathway; LL-2,6-diaminopimelate from (S)-tetrahydrodipicolinate (succinylase route): step 3/3. In terms of biological role, catalyzes the hydrolysis of N-succinyl-L,L-diaminopimelic acid (SDAP), forming succinate and LL-2,6-diaminopimelate (DAP), an intermediate involved in the bacterial biosynthesis of lysine and meso-diaminopimelic acid, an essential component of bacterial cell walls. The chain is Succinyl-diaminopimelate desuccinylase from Escherichia coli O17:K52:H18 (strain UMN026 / ExPEC).